Here is a 109-residue protein sequence, read N- to C-terminus: Flagellar hook-basal body complex protein FliE (109 aa).

This sequence belongs to the FliE family.

The protein resides in the bacterial flagellum basal body. The sequence is that of Flagellar hook-basal body complex protein FliE from Pseudomonas savastanoi pv. phaseolicola (strain 1448A / Race 6) (Pseudomonas syringae pv. phaseolicola (strain 1448A / Race 6)).